The following is a 147-amino-acid chain: Urease accessory protein UreE (147 aa).

Belongs to the UreE family.

The protein resides in the cytoplasm. In terms of biological role, involved in urease metallocenter assembly. Binds nickel. Probably functions as a nickel donor during metallocenter assembly. This is Urease accessory protein UreE from Marinomonas sp. (strain MWYL1).